The chain runs to 254 residues: N-acetylglucosamine-induced protein 1 (254 aa).

The protein resides in the cytoplasm. N-acetylglucosamine-induced protein which plays a role in the N-acetylglucosamine metabolic pathway. The polypeptide is N-acetylglucosamine-induced protein 1 (Candida albicans (strain SC5314 / ATCC MYA-2876) (Yeast)).